Here is a 214-residue protein sequence, read N- to C-terminus: Galactokinase (214 aa).

Alpha-D-galactose-binding residues include Arg-47, Asp-53, His-54, and Asp-56. Gly-149, Gly-151, Ser-153, and Ser-154 together coordinate ATP. Position 199 (Asp-199) interacts with alpha-D-galactose. The Proton acceptor role is filled by Asp-199.

This sequence belongs to the GHMP kinase family. GalK subfamily.

The enzyme catalyses alpha-D-galactose + ATP = alpha-D-galactose 1-phosphate + ADP + H(+). Its pathway is carbohydrate metabolism; galactose metabolism. Galactokinase is a key enzyme in the galactose metabolism where it catalyzes the conversion of alpha-D-galactose to galactose 1-phosphate. Can also induce the transcription of the gal genes in response to the organism being challenged with galactose as the sole source of carbon. In Candida maltosa (Yeast), this protein is Galactokinase.